Reading from the N-terminus, the 493-residue chain is Cytoplasmic tRNA 2-thiolation protein 2 (493 aa).

Residue Ser489 is modified to Phosphoserine.

It belongs to the CTU2/NCS2 family. Interacts with NCS6 and URM1. May act by forming a heterodimer with NCS6.

It localises to the cytoplasm. The protein operates within tRNA modification; 5-methoxycarbonylmethyl-2-thiouridine-tRNA biosynthesis. Its function is as follows. Plays a central role in 2-thiolation of mcm(5)S(2)U at tRNA wobble positions of tRNA(Lys), tRNA(Glu) and tRNA(Gln). May act by forming a heterodimer with NCS6 that ligates sulfur from thiocarboxylated URM1 onto the uridine of tRNAs at wobble position. Prior mcm(5) tRNA modification by the elongator complex is required for 2-thiolation. May also be involved in protein urmylation. This chain is Cytoplasmic tRNA 2-thiolation protein 2, found in Saccharomyces cerevisiae (strain RM11-1a) (Baker's yeast).